The following is a 61-amino-acid chain: KICYNQPSSQHPTTKACPGEKNCYRKQWSDHRGTIIERGCGCPTVKPGVKLHCCTTEKCNN.

4 disulfides stabilise this stretch: C3/C23, C17/C40, C42/C53, and C54/C59.

The protein belongs to the three-finger toxin family. Short-chain subfamily. Type I alpha-neurotoxin sub-subfamily. Expressed by the venom gland.

It localises to the secreted. Functionally, binds to muscle nicotinic acetylcholine receptor (nAChR) and inhibit acetylcholine from binding to the receptor, thereby impairing neuromuscular transmission. The sequence is that of Short neurotoxin 1 from Naja annulata annulata (Banded water cobra).